Reading from the N-terminus, the 184-residue chain is Small ribosomal subunit protein uS4c (184 aa).

The S4 RNA-binding domain occupies 82 to 143 (MRLDNILFRL…KQRSKALIQN (62 aa)).

It belongs to the universal ribosomal protein uS4 family. As to quaternary structure, part of the 30S ribosomal subunit. Contacts protein S5. The interaction surface between S4 and S5 is involved in control of translational fidelity.

It localises to the plastid. It is found in the chloroplast. Functionally, one of the primary rRNA binding proteins, it binds directly to 16S rRNA where it nucleates assembly of the body of the 30S subunit. With S5 and S12 plays an important role in translational accuracy. The chain is Small ribosomal subunit protein uS4c (rps4) from Patersonia fragilis (Short purple-flag).